A 92-amino-acid polypeptide reads, in one-letter code: Small ribosomal subunit protein uS19 (92 aa).

Belongs to the universal ribosomal protein uS19 family.

Functionally, protein S19 forms a complex with S13 that binds strongly to the 16S ribosomal RNA. The chain is Small ribosomal subunit protein uS19 from Tolumonas auensis (strain DSM 9187 / NBRC 110442 / TA 4).